The following is a 197-amino-acid chain: uncharacterized protein (197 aa).

The chain crosses the membrane as a helical span at residues 7 to 27 (PISVGQMVLICIFILIILFVI).

The protein belongs to the IIV-6 307L family.

The protein resides in the membrane. This is an uncharacterized protein from Acheta domesticus (House cricket).